A 308-amino-acid chain; its full sequence is tRNA pseudouridine synthase B (308 aa).

The active-site Nucleophile is the Asp-47.

Belongs to the pseudouridine synthase TruB family. Type 1 subfamily.

It catalyses the reaction uridine(55) in tRNA = pseudouridine(55) in tRNA. Responsible for synthesis of pseudouridine from uracil-55 in the psi GC loop of transfer RNAs. The protein is tRNA pseudouridine synthase B of Rhodospirillum rubrum (strain ATCC 11170 / ATH 1.1.1 / DSM 467 / LMG 4362 / NCIMB 8255 / S1).